The primary structure comprises 410 residues: Peptidase T (410 aa).

H79 provides a ligand contact to Zn(2+). D81 is a catalytic residue. Zn(2+) is bound at residue D142. The Proton acceptor role is filled by E176. Residues E177, D199, and H381 each contribute to the Zn(2+) site.

The protein belongs to the peptidase M20B family. Requires Zn(2+) as cofactor.

It is found in the cytoplasm. The enzyme catalyses Release of the N-terminal residue from a tripeptide.. Its function is as follows. Cleaves the N-terminal amino acid of tripeptides. This is Peptidase T from Listeria innocua serovar 6a (strain ATCC BAA-680 / CLIP 11262).